The sequence spans 151 residues: 3-hydroxyacyl-[acyl-carrier-protein] dehydratase FabZ (151 aa).

H54 is an active-site residue.

Belongs to the thioester dehydratase family. FabZ subfamily.

It localises to the cytoplasm. The enzyme catalyses a (3R)-hydroxyacyl-[ACP] = a (2E)-enoyl-[ACP] + H2O. Its function is as follows. Involved in unsaturated fatty acids biosynthesis. Catalyzes the dehydration of short chain beta-hydroxyacyl-ACPs and long chain saturated and unsaturated beta-hydroxyacyl-ACPs. This chain is 3-hydroxyacyl-[acyl-carrier-protein] dehydratase FabZ, found in Buchnera aphidicola subsp. Acyrthosiphon pisum (strain 5A).